Here is a 373-residue protein sequence, read N- to C-terminus: Carboxylesterase/phospholipase LipF (373 aa).

The Involved in the stabilization of the negatively charged intermediate by the formation of the oxyanion hole signature appears at histidine 116 to glycine 118. Catalysis depends on residues serine 186, glutamate 285, and histidine 315.

This sequence belongs to the 'GDXG' lipolytic enzyme family.

The enzyme catalyses a carboxylic ester + H2O = an alcohol + a carboxylate + H(+). It carries out the reaction a 1,2-diacyl-sn-glycero-3-phosphocholine + H2O = phosphocholine + a 1,2-diacyl-sn-glycerol + H(+). Its function is as follows. A short-chain esterase and phospholipase. This Mycobacterium tuberculosis (strain CDC 1551 / Oshkosh) protein is Carboxylesterase/phospholipase LipF.